The following is a 311-amino-acid chain: Thioredoxin reductase (311 aa).

33–43 serves as a coordination point for FAD; sequence EGFFSGISGGQ. An intrachain disulfide couples C138 to C141. Residue 283 to 292 participates in FAD binding; it reads DVQDKYYRQA.

It belongs to the class-II pyridine nucleotide-disulfide oxidoreductase family. As to quaternary structure, homodimer. FAD serves as cofactor.

The protein localises to the cytoplasm. The enzyme catalyses [thioredoxin]-dithiol + NADP(+) = [thioredoxin]-disulfide + NADPH + H(+). The polypeptide is Thioredoxin reductase (trxB) (Chlamydia pneumoniae (Chlamydophila pneumoniae)).